A 354-amino-acid polypeptide reads, in one-letter code: DNA polymerase IV (354 aa).

The UmuC domain occupies 6 to 187 (IIHVDCDCFY…LPVARLHGVG (182 aa)). Residues Asp-10 and Asp-105 each contribute to the Mg(2+) site. Glu-106 is an active-site residue.

It belongs to the DNA polymerase type-Y family. Monomer. It depends on Mg(2+) as a cofactor.

The protein localises to the cytoplasm. It carries out the reaction DNA(n) + a 2'-deoxyribonucleoside 5'-triphosphate = DNA(n+1) + diphosphate. Functionally, poorly processive, error-prone DNA polymerase involved in untargeted mutagenesis. Copies undamaged DNA at stalled replication forks, which arise in vivo from mismatched or misaligned primer ends. These misaligned primers can be extended by PolIV. Exhibits no 3'-5' exonuclease (proofreading) activity. May be involved in translesional synthesis, in conjunction with the beta clamp from PolIII. The chain is DNA polymerase IV from Pseudomonas putida (strain GB-1).